We begin with the raw amino-acid sequence, 802 residues long: Copper-exporting P-type ATPase (802 aa).

2 HMA domains span residues 5-70 (KKTT…YGVA) and 72-138 (ETVE…YDAS). Cu(+)-binding residues include cysteine 16, cysteine 19, cysteine 83, and cysteine 86. Helical transmembrane passes span 161-181 (LIIS…HLFN), 192-212 (WFQF…FYVG), 224-244 (MDVL…YEMV), 256-276 (LYFE…YLEA), 411-431 (YFVP…ITLV), and 438-458 (PALV…LGLA). The 4-aspartylphosphate intermediate role is filled by aspartate 495. Positions 690 and 694 each coordinate Mg(2+). A run of 2 helical transmembrane segments spans residues 748-767 (LFWA…LGLL) and 771-790 (VAGA…ALRL).

The protein belongs to the cation transport ATPase (P-type) (TC 3.A.3) family. Type IB subfamily.

It is found in the cell membrane. It catalyses the reaction Cu(+)(in) + ATP + H2O = Cu(+)(out) + ADP + phosphate + H(+). In terms of biological role, involved in copper export. This Staphylococcus aureus (strain MW2) protein is Copper-exporting P-type ATPase (copA).